A 454-amino-acid chain; its full sequence is Ribosomal protein uS12 methylthiotransferase RimO (454 aa).

Residues 14–125 enclose the MTTase N-terminal domain; sequence SKVAFSHVGC…IAKVLDRVEQ (112 aa). Positions 23, 59, 88, 163, 167, and 170 each coordinate [4Fe-4S] cluster. The region spanning 149–378 is the Radical SAM core domain; the sequence is DKNKFVAYLR…ISVQQNISKD (230 aa). One can recognise a TRAM domain in the interval 381-452; sequence QTYVGSKMKI…EYDLYGEIIK (72 aa).

It belongs to the methylthiotransferase family. RimO subfamily. [4Fe-4S] cluster is required as a cofactor.

The protein resides in the cytoplasm. The catalysed reaction is L-aspartate(89)-[ribosomal protein uS12]-hydrogen + (sulfur carrier)-SH + AH2 + 2 S-adenosyl-L-methionine = 3-methylsulfanyl-L-aspartate(89)-[ribosomal protein uS12]-hydrogen + (sulfur carrier)-H + 5'-deoxyadenosine + L-methionine + A + S-adenosyl-L-homocysteine + 2 H(+). Functionally, catalyzes the methylthiolation of an aspartic acid residue of ribosomal protein uS12. The polypeptide is Ribosomal protein uS12 methylthiotransferase RimO (Prochlorococcus marinus (strain AS9601)).